The chain runs to 369 residues: Biglycan (369 aa).

Residues 1–16 (MCPLWLLAALLALSQA) form the signal peptide. Residues 17 to 37 (LPFEQKAFWDFTLDDGLPMLN) constitute a propeptide that is removed on maturation. Serine 42 and serine 48 each carry an O-linked (Xyl...) (glycosaminoglycan) serine glycan. Intrachain disulfides connect cysteine 64-cysteine 70 and cysteine 68-cysteine 77. LRR repeat units follow at residues 83 to 103 (KAVP…NNDI), 104 to 127 (SELR…NNKI), 128 to 151 (SKIH…KNHL), 152 to 172 (VEIP…DNRI), 173 to 196 (RKVP…GNPL), 197 to 221 (ENSG…EAKL), 222 to 242 (TGIP…HNKI), 243 to 266 (QAIE…HNQI), 267 to 290 (RMIE…NNKL), 291 to 313 (SRVP…TNNI), 314 to 343 (TKVG…NNPV), and 344 to 369 (PYWE…NYKK). Residues asparagine 271 and asparagine 312 are each glycosylated (N-linked (GlcNAc...) asparagine). Cysteine 322 and cysteine 355 are disulfide-bonded.

It belongs to the small leucine-rich proteoglycan (SLRP) family. SLRP class I subfamily. Homodimer. Forms a ternary complex with MFAP2 and ELN. Post-translationally, the two attached glycosaminoglycan chains can be either chondroitin sulfate or dermatan sulfate. Found in several connective tissues, especially in articular cartilages.

The protein localises to the secreted. It is found in the extracellular space. The protein resides in the extracellular matrix. Its function is as follows. May be involved in collagen fiber assembly. The protein is Biglycan (BGN) of Ovis aries (Sheep).